Reading from the N-terminus, the 395-residue chain is MTLPVNPVDNLAALIRCPSVTPAEGGALTALEKMLKLMGFSANRPVFSDDNTPDIENLYARKSGNGPHLMFAGHTDVVPPGDEKDWKHPPFAAAIEDGVMYGRGAVDMKGGIACFVAAVARHIEKHGNIKGSISFLITGDEEGPAVNGTVKLLEWAKQRGESWDASIVGEPTNPNALGDMIKIGRRGSLSGTITVHGVQGHAAYPHLAENPVRGIVTLVDSLLYPAFDEGTANFQASNLEVTTIDVGNKATNVIPNKATASFNIRFNDTWTAESLQAEIISRLERAARDNRLRQGRETPIKYELTWRERPSHVFLTHDEKLIGTLTASVEAVTGKRPELSTSGGTSDARFIKDYCPVVEFGLTGQTMHMVDERVALADLEGLTQIYERFIADFFG.

Histidine 74 contacts Zn(2+). Aspartate 76 is a catalytic residue. Aspartate 107 is a binding site for Zn(2+). Glutamate 141 serves as the catalytic Proton acceptor. Zn(2+) is bound by residues glutamate 142, glutamate 170, and histidine 368.

It belongs to the peptidase M20A family. DapE subfamily. Homodimer. Requires Zn(2+) as cofactor. It depends on Co(2+) as a cofactor.

The enzyme catalyses N-succinyl-(2S,6S)-2,6-diaminopimelate + H2O = (2S,6S)-2,6-diaminopimelate + succinate. It functions in the pathway amino-acid biosynthesis; L-lysine biosynthesis via DAP pathway; LL-2,6-diaminopimelate from (S)-tetrahydrodipicolinate (succinylase route): step 3/3. Catalyzes the hydrolysis of N-succinyl-L,L-diaminopimelic acid (SDAP), forming succinate and LL-2,6-diaminopimelate (DAP), an intermediate involved in the bacterial biosynthesis of lysine and meso-diaminopimelic acid, an essential component of bacterial cell walls. The chain is Succinyl-diaminopimelate desuccinylase from Brucella melitensis biotype 2 (strain ATCC 23457).